The sequence spans 96 residues: Co-chaperonin GroES (96 aa).

The protein belongs to the GroES chaperonin family. In terms of assembly, heptamer of 7 subunits arranged in a ring. Interacts with the chaperonin GroEL.

Its subcellular location is the cytoplasm. Together with the chaperonin GroEL, plays an essential role in assisting protein folding. The GroEL-GroES system forms a nano-cage that allows encapsulation of the non-native substrate proteins and provides a physical environment optimized to promote and accelerate protein folding. GroES binds to the apical surface of the GroEL ring, thereby capping the opening of the GroEL channel. The protein is Co-chaperonin GroES of Shewanella halifaxensis (strain HAW-EB4).